Consider the following 273-residue polypeptide: Sanguinarine reductase (273 aa).

S153 serves as the catalytic Proton donor. Substrate-binding positions include 157–161 (CDPDH) and K175.

It belongs to the NAD(P)-dependent epimerase/dehydratase family. Monomer.

It catalyses the reaction dihydrosanguinarine + NADP(+) = sanguinarine + NADPH. It carries out the reaction dihydrosanguinarine + NAD(+) = sanguinarine + NADH. The catalysed reaction is dihydrochelirubine + NAD(+) = chelirubine + NADH. The enzyme catalyses dihydrochelirubine + NADP(+) = chelirubine + NADPH. With respect to regulation, inhibited by iodoacetamide and irreversibly by its product, dihydrosanguinarine. Its function is as follows. Catalyzes the reduction of benzophenanthridines, preferentially sanguinarine, to the corresponding dihydroalkaloids. Involved in detoxifying the phytoalexins produced by plant itself. The sanguinarine produced by intact cells upon elicitation, after excretion and binding to cell wall elements, is rapidly reabsorbed and reduced to the less toxic dihydrosanguinarine. Can work with both NAD(P) or NAD as a hydrogen donor, but at low concentrations, the reaction velocity with NAD(P)H is threefold higher than with NADH. However, chelerythrine shows maximum conversion rates with NADH. The substrate preference is sanguinarine &gt; chelerythrine &gt; chelirubine, macarpine or 10-OH-chelerythrine. No activity with berberine or phenanthridine cations. This Eschscholzia californica (California poppy) protein is Sanguinarine reductase.